The following is a 124-amino-acid chain: MTSIHTGSNNNIVELDMSELIRPIPPVLDMNKVNSMMETMTGKTPPASCGLTSEDLEAGELPPVDVLTFKKSGKPYYFAFGGCHRLRAHDEAGRKKVRCKLVNCSPNTLRLYLGASANKFLDSD.

It belongs to the sulfiredoxin family. As to quaternary structure, interacts with tpx1 in response to oxidative stress.

Its subcellular location is the cytoplasm. The protein localises to the nucleus. It carries out the reaction S-hydroxy-S-oxy-L-cysteinyl-[peroxiredoxin] + [protein]-dithiol + ATP = S-hydroxy-L-cysteinyl-[peroxiredoxin] + [protein]-disulfide + ADP + phosphate. In terms of biological role, contributes to oxidative stress resistance by reducing cysteine-sulfinic acid formed under exposure to oxidants in a peroxiredoxin. May catalyze the reduction in a multi-step process by acting both as a specific phosphotransferase and a thioltransferase. This is Sulfiredoxin (srx1) from Schizosaccharomyces pombe (strain 972 / ATCC 24843) (Fission yeast).